The following is a 128-amino-acid chain: L-ectoine synthase (128 aa).

This sequence belongs to the ectoine synthase family.

It carries out the reaction (2S)-4-acetamido-2-aminobutanoate = L-ectoine + H2O. It participates in amine and polyamine biosynthesis; ectoine biosynthesis; L-ectoine from L-aspartate 4-semialdehyde: step 3/3. Catalyzes the circularization of gamma-N-acetyl-alpha,gamma-diaminobutyric acid (ADABA) to ectoine (1,4,5,6-tetrahydro-2-methyl-4-pyrimidine carboxylic acid), which is an excellent osmoprotectant. This is L-ectoine synthase from Aliivibrio fischeri (strain MJ11) (Vibrio fischeri).